Here is a 281-residue protein sequence, read N- to C-terminus: BEN domain-containing protein 6 (281 aa).

Disordered regions lie at residues 15–62 (VLRK…ETPL) and 143–172 (SFAS…PGEK). Residues 19–99 (RKRKRTETAN…RLRQSLVMLQ (81 aa)) adopt a coiled-coil conformation. Over residues 143 to 160 (SFASLCSNSNSTSSSPSS) the composition is skewed to low complexity. Basic and acidic residues predominate over residues 162–172 (KAEEEQHPGEK). Positions 171-271 (EKQFTIERWQ…NCTKKPNASK (101 aa)) constitute a BEN domain.

As to quaternary structure, interacts (via BEN domain) with RBPJ.

The protein localises to the nucleus. Acts as a corepressor of recombining binding protein suppressor hairless (RBPJ) and inhibits Notch signaling in neural stem cells, thereby opposing their self-renewal and promoting neurogenesis. This is BEN domain-containing protein 6 (Bend6) from Mus musculus (Mouse).